The following is a 536-amino-acid chain: Probable pectinesterase/pectinesterase inhibitor 59 (536 aa).

An N-terminal signal peptide occupies residues 1–30; that stretch reads MNMMMQKLSILFLHLILLVLLCVHPLTTVA. Residues 31–183 are pectinesterase inhibitor 59; it reads DRNSTDWCDK…SHLISNCLAV (153 aa). N33, N91, N116, N159, and N195 each carry an N-linked (GlcNAc...) asparagine glycan. The tract at residues 221–522 is pectinesterase 59; it reads NLVVAKDGSG…FTVGKFIAGT (302 aa). 2 residues coordinate substrate: T298 and Q328. Residue D351 is the Proton donor; for pectinesterase activity of the active site. The cysteines at positions 365 and 385 are disulfide-linked. Catalysis depends on D372, which acts as the Nucleophile; for pectinesterase activity. The substrate site is built by R440 and W442.

The protein in the N-terminal section; belongs to the PMEI family. This sequence in the C-terminal section; belongs to the pectinesterase family. As to expression, expressed in siliques.

It is found in the secreted. It localises to the cell wall. The catalysed reaction is [(1-&gt;4)-alpha-D-galacturonosyl methyl ester](n) + n H2O = [(1-&gt;4)-alpha-D-galacturonosyl](n) + n methanol + n H(+). Its pathway is glycan metabolism; pectin degradation; 2-dehydro-3-deoxy-D-gluconate from pectin: step 1/5. Functionally, acts in the modification of cell walls via demethylesterification of cell wall pectin. In Arabidopsis thaliana (Mouse-ear cress), this protein is Probable pectinesterase/pectinesterase inhibitor 59 (PME59).